The primary structure comprises 254 residues: MGSRLSPEANAEVPREALSFHGDATGAQVHLDDQRSTARRRSTFHDGIVFSQRPVWPGERVALRVLRHEDGWCGGLRVGFTRLDPAQVAASCLPPFVCPDLEEQSPTWAALLPEGFVRAGNVVCFWVNRRGWLFAKVNAGRPLLLRKDVLVQGAPLWAVMDVYGTTKAIELLDPKANAWITSGEPMPESEVTSGEECVICFHNTANTRLMPCGHSQFCGSCAWHIFKDTARCPMCRWQIEEVAVEPSVKSGEGS.

In terms of domain architecture, NHR spans 17-174; sequence ALSFHGDATG…TTKAIELLDP (158 aa). Residues 197-236 form an RING-type zinc finger; sequence CVICFHNTANTRLMPCGHSQFCGSCAWHIFKDTARCPMCR.

The protein localises to the cytoplasm. It catalyses the reaction S-ubiquitinyl-[E2 ubiquitin-conjugating enzyme]-L-cysteine + [acceptor protein]-L-lysine = [E2 ubiquitin-conjugating enzyme]-L-cysteine + N(6)-ubiquitinyl-[acceptor protein]-L-lysine.. Its pathway is protein modification; protein ubiquitination. Its function is as follows. E3 ubiquitin-protein ligase that plays a role in various biological processes such as lung development or innate immunity. Seems to utilize UBE2E1. Promotes innate antiviral response by catalyzing 'Lys-63'-linked ubiquitination of IRF7. Also inhibits hepatitis C virus assembly by directly binding to viral E1 envelope glycoprotein to disrupt its interaction with E2. Plays an essential role in TLR4-mediated activation of MAPK pathways by promoting 'Lys-48'-linked polyubiquitination of the phosphatase DUSP1/MKP1. This chain is E3 ubiquitin-protein ligase NEURL3 (Neurl3), found in Rattus norvegicus (Rat).